We begin with the raw amino-acid sequence, 344 residues long: uncharacterized protein (344 aa).

Transmembrane regions (helical) follow at residues 53-73, 84-104, 153-173, 189-209, and 275-295; these read FVVG…VSVW, WPIL…GYNI, IYPL…LYLL, FGAW…LEML, and IASE…VGVF.

The protein belongs to the steroid 5-alpha reductase family.

The protein resides in the endoplasmic reticulum membrane. This is an uncharacterized protein from Schizosaccharomyces pombe (strain 972 / ATCC 24843) (Fission yeast).